Consider the following 731-residue polypeptide: Gelsolin (731 aa).

Residues 2–125 (VVEHPEFLKA…YKKGGVASGF (124 aa)) are actin-severing. One copy of the Gelsolin-like 1 repeat lies at 25-107 (FDLVPVPPNL…VQGFESATFL (83 aa)). Tyrosine 35 carries the phosphotyrosine modification. Glycine 41, aspartate 42, glutamate 73, aspartate 85, glycine 90, and alanine 92 together coordinate Ca(2+). The segment at 72-75 (DESG) is actin-actin interfilament contact point. Residue 111 to 118 (KSGLKYKK) participates in a 1,2-diacyl-sn-glycero-3-phospho-(1D-myo-inositol-4,5-bisphosphate) binding. Valine 121 serves as a coordination point for Ca(2+). 137 to 145 (RLFQVKGRR) contacts a 1,2-diacyl-sn-glycero-3-phospho-(1D-myo-inositol-4,5-bisphosphate). One copy of the Gelsolin-like 2 repeat lies at 147–219 (VRATEVPVSW…SEEGAEPEAM (73 aa)). Ca(2+) is bound by residues glycine 162 and aspartate 163. Cysteine 164 and cysteine 177 are disulfide-bonded. Glutamate 185 provides a ligand contact to Ca(2+). Over residues 197-211 (RDNERSGRARVHVSE) the composition is skewed to basic and acidic residues. Residues 197-216 (RDNERSGRARVHVSEEGAEP) are disordered. Ca(2+) is bound by residues aspartate 235, glutamate 278, aspartate 279, and glutamate 303. A Gelsolin-like 3 repeat occupies 266-338 (DENPFAQGAL…LPEGGETPLF (73 aa)). Tyrosine 358 and tyrosine 414 each carry phosphotyrosine. The tract at residues 383–731 (AAQHGMDDDG…LDRALAELAA (349 aa)) is actin-binding, Ca-sensitive. A Gelsolin-like 4 repeat occupies 404 to 485 (SDKVPVDPAT…VQGKEPAHLM (82 aa)). Glycine 420, aspartate 421, glutamate 451, aspartate 463, glycine 468, proline 470, and threonine 500 together coordinate Ca(2+). A Gelsolin-like 5 repeat occupies 527-591 (AVEVMPKAGA…AEGSEPDSFW (65 aa)). Lysine 533 carries the N6-acetyllysine modification. Ca(2+) contacts are provided by asparagine 540 and aspartate 541. Tyrosine 552 is subject to Phosphotyrosine. Glutamate 563 is a binding site for Ca(2+). Tyrosine 600 carries the phosphotyrosine modification. A Gelsolin-like 6 repeat occupies 630–705 (IEEVPGELMQ…VKQGFEPPSF (76 aa)). The Ca(2+) site is built by aspartate 645, aspartate 646, and glutamate 668. Threonine 691 bears the Phosphothreonine mark.

This sequence belongs to the villin/gelsolin family. Binds to actin and to fibronectin. Identified in a complex composed of ACTA1, COBL, GSN and TMSB4X. Interacts with the inactive form of EIF2AK2/PKR. Interacts with FLII.

It localises to the cytoplasm. The protein resides in the cytoskeleton. Functionally, calcium-regulated, actin-modulating protein that binds to the plus (or barbed) ends of actin monomers or filaments, preventing monomer exchange (end-blocking or capping). It can promote the assembly of monomers into filaments (nucleation) as well as sever filaments already formed. Plays a role in ciliogenesis. This Bos taurus (Bovine) protein is Gelsolin (GSN).